Here is a 297-residue protein sequence, read N- to C-terminus: MKRPDYRTLQALDAVIRERGFERAAQKLCITQSAVSQRIKQLENMFGQPLLVRTVPPRPTEQGQKLLALLRQVELLEEEWLGDEQTGSTPLLLSLAVNADSLATWLLPALAPVLADSPIRLNLQVEDETRTQERLRRGEVVGAVSIQPQALPSCLVDKLGALDYLFVSSKPFAEKYFPNGVTRAALLKAPVVAFDHLDDMHQAFLQQNFDLPPGSVPCHIVNSSEAFVQLARQGTTCCMIPHLQIEKELASGELINLTPGLLQRRMLYWHRFAPESRMMRKVTDALLEYGHKVLRQD.

The 57-residue stretch at 4–60 folds into the HTH lysR-type domain; it reads PDYRTLQALDAVIRERGFERAAQKLCITQSAVSQRIKQLENMFGQPLLVRTVPPRPT. Residues 21 to 40 constitute a DNA-binding region (H-T-H motif); it reads FERAAQKLCITQSAVSQRIK.

The protein belongs to the LysR transcriptional regulatory family. In terms of assembly, homodimer.

Functionally, controls the transcription of genes involved in arginine and lysine metabolism. The protein is HTH-type transcriptional regulator ArgP of Escherichia fergusonii (strain ATCC 35469 / DSM 13698 / CCUG 18766 / IAM 14443 / JCM 21226 / LMG 7866 / NBRC 102419 / NCTC 12128 / CDC 0568-73).